A 195-amino-acid chain; its full sequence is Large ribosomal subunit protein uL18 (195 aa).

It belongs to the universal ribosomal protein uL18 family. Part of the 50S ribosomal subunit. Contacts the 5S and 23S rRNAs.

Its function is as follows. This is one of the proteins that bind and probably mediate the attachment of the 5S RNA into the large ribosomal subunit, where it forms part of the central protuberance. The polypeptide is Large ribosomal subunit protein uL18 (Methanocaldococcus jannaschii (strain ATCC 43067 / DSM 2661 / JAL-1 / JCM 10045 / NBRC 100440) (Methanococcus jannaschii)).